Consider the following 33-residue polypeptide: Photosystem II reaction center protein Psb30 (33 aa).

A helical membrane pass occupies residues 5-25 (LIVQLGSLTLITLAGPLVVVL).

Belongs to the Psb30/Ycf12 family. As to quaternary structure, PSII is composed of 1 copy each of membrane proteins PsbA, PsbB, PsbC, PsbD, PsbE, PsbF, PsbH, PsbI, PsbJ, PsbK, PsbL, PsbM, PsbT, PsbY, PsbZ, Psb30/Ycf12, peripheral proteins of the oxygen-evolving complex and a large number of cofactors. It forms dimeric complexes.

The protein localises to the plastid. It is found in the chloroplast thylakoid membrane. Functionally, a core subunit of photosystem II (PSII), probably helps stabilize the reaction center. This Euglena deses protein is Photosystem II reaction center protein Psb30.